The primary structure comprises 592 residues: A-type ATP synthase subunit A (592 aa).

236–243 (GPFGSGKT) lines the ATP pocket.

The protein belongs to the ATPase alpha/beta chains family. Has multiple subunits with at least A(3), B(3), C, D, E, F, H, I and proteolipid K(x).

It is found in the cell membrane. The enzyme catalyses ATP + H2O + 4 H(+)(in) = ADP + phosphate + 5 H(+)(out). Component of the A-type ATP synthase that produces ATP from ADP in the presence of a proton gradient across the membrane. The A chain is the catalytic subunit. The protein is A-type ATP synthase subunit A of Methanopyrus kandleri (strain AV19 / DSM 6324 / JCM 9639 / NBRC 100938).